Reading from the N-terminus, the 158-residue chain is uncharacterized protein (158 aa).

Disordered stretches follow at residues 1–86 and 138–158; these read MDFR…DHWW and ASQV…LLGF. Residues 7-76 are compositionally biased toward low complexity; sequence SPTTCTTPAS…PTPASSGSAA (70 aa).

This is an uncharacterized protein from Homo sapiens (Human).